The sequence spans 130 residues: uncharacterized protein (130 aa).

Residues 1-26 (MINNFKGILIIILSFLFLLLFKYSNA) form the signal peptide. An N-linked (GlcNAc...) asparagine glycan is attached at Asn58.

This sequence belongs to the Dictyostelium gerABC family.

The protein localises to the secreted. This is an uncharacterized protein from Dictyostelium discoideum (Social amoeba).